The following is a 533-amino-acid chain: Lanosterol 14-alpha demethylase (533 aa).

Cysteine 472 contributes to the heme binding site.

The protein belongs to the cytochrome P450 family. Heme is required as a cofactor.

The protein resides in the membrane. It carries out the reaction a 14alpha-methyl steroid + 3 reduced [NADPH--hemoprotein reductase] + 3 O2 = a Delta(14) steroid + formate + 3 oxidized [NADPH--hemoprotein reductase] + 4 H2O + 4 H(+). It catalyses the reaction a 14alpha-methyl steroid + reduced [NADPH--hemoprotein reductase] + O2 = a 14alpha-hydroxymethyl steroid + oxidized [NADPH--hemoprotein reductase] + H2O + H(+). The catalysed reaction is a 14alpha-hydroxymethyl steroid + reduced [NADPH--hemoprotein reductase] + O2 = a 14alpha-formyl steroid + oxidized [NADPH--hemoprotein reductase] + 2 H2O + H(+). The enzyme catalyses a 14alpha-formyl steroid + reduced [NADPH--hemoprotein reductase] + O2 = a Delta(14) steroid + formate + oxidized [NADPH--hemoprotein reductase] + H2O + 2 H(+). It carries out the reaction lanosterol + 3 reduced [NADPH--hemoprotein reductase] + 3 O2 = 4,4-dimethyl-5alpha-cholesta-8,14,24-trien-3beta-ol + formate + 3 oxidized [NADPH--hemoprotein reductase] + 4 H2O + 4 H(+). It catalyses the reaction lanosterol + reduced [NADPH--hemoprotein reductase] + O2 = 32-hydroxylanosterol + oxidized [NADPH--hemoprotein reductase] + H2O + H(+). The catalysed reaction is 32-hydroxylanosterol + reduced [NADPH--hemoprotein reductase] + O2 = 32-oxolanosterol + oxidized [NADPH--hemoprotein reductase] + 2 H2O + H(+). The enzyme catalyses 32-oxolanosterol + reduced [NADPH--hemoprotein reductase] + O2 = 4,4-dimethyl-5alpha-cholesta-8,14,24-trien-3beta-ol + formate + oxidized [NADPH--hemoprotein reductase] + H2O + 2 H(+). It carries out the reaction eburicol + 3 reduced [NADPH--hemoprotein reductase] + 3 O2 = 14-demethyleburicol + formate + 3 oxidized [NADPH--hemoprotein reductase] + 4 H2O + 4 H(+). It catalyses the reaction eburicol + reduced [NADPH--hemoprotein reductase] + O2 = 32-hydroxyeburicol + oxidized [NADPH--hemoprotein reductase] + H2O + H(+). The catalysed reaction is 32-hydroxyeburicol + reduced [NADPH--hemoprotein reductase] + O2 = 32-oxoeburicol + oxidized [NADPH--hemoprotein reductase] + 2 H2O + H(+). The enzyme catalyses 32-oxoeburicol + reduced [NADPH--hemoprotein reductase] + O2 = 14-demethyleburicol + formate + oxidized [NADPH--hemoprotein reductase] + H2O + 2 H(+). The protein operates within steroid biosynthesis; zymosterol biosynthesis; zymosterol from lanosterol: step 1/6. Sterol 14alpha-demethylase that plays a critical role in the third module of ergosterol biosynthesis pathway, being ergosterol the major sterol component in fungal membranes that participates in a variety of functions. The third module or late pathway involves the ergosterol synthesis itself through consecutive reactions that mainly occur in the endoplasmic reticulum (ER) membrane. In filamentous fungi, during the initial step of this module, lanosterol (lanosta-8,24-dien-3beta-ol) can be metabolized to eburicol. Sterol 14alpha-demethylase catalyzes the three-step oxidative removal of the 14alpha-methyl group (C-32) of both these sterols in the form of formate, and converts eburicol and lanosterol to 14-demethyleburicol (4,4,24-trimethylergosta-8,14,24(28)-trienol) and 4,4-dimethyl-5alpha-cholesta-8,14,24-trien-3beta-ol, respectively, which are further metabolized by other enzymes in the pathway to ergosterol. Can also use substrates not intrinsic to fungi, such as 24,25-dihydrolanosterol (DHL), producing 4,4-dimethyl-8,14-cholestadien-3-beta-ol, but at lower rates than the endogenous substrates. The chain is Lanosterol 14-alpha demethylase (ERG11) from Candida glabrata (strain ATCC 2001 / BCRC 20586 / JCM 3761 / NBRC 0622 / NRRL Y-65 / CBS 138) (Yeast).